A 232-amino-acid polypeptide reads, in one-letter code: 5'-methylthioadenosine/S-adenosylhomocysteine nucleosidase (232 aa).

Glu-12 functions as the Proton acceptor in the catalytic mechanism. Residues Gly-78, Ile-152, and 173–174 (ME) contribute to the substrate site. The active-site Proton donor is Asp-197.

Belongs to the PNP/UDP phosphorylase family. MtnN subfamily. Homodimer.

The enzyme catalyses S-adenosyl-L-homocysteine + H2O = S-(5-deoxy-D-ribos-5-yl)-L-homocysteine + adenine. It catalyses the reaction S-methyl-5'-thioadenosine + H2O = 5-(methylsulfanyl)-D-ribose + adenine. The catalysed reaction is 5'-deoxyadenosine + H2O = 5-deoxy-D-ribose + adenine. Its pathway is amino-acid biosynthesis; L-methionine biosynthesis via salvage pathway; S-methyl-5-thio-alpha-D-ribose 1-phosphate from S-methyl-5'-thioadenosine (hydrolase route): step 1/2. Functionally, catalyzes the irreversible cleavage of the glycosidic bond in both 5'-methylthioadenosine (MTA) and S-adenosylhomocysteine (SAH/AdoHcy) to adenine and the corresponding thioribose, 5'-methylthioribose and S-ribosylhomocysteine, respectively. Also cleaves 5'-deoxyadenosine, a toxic by-product of radical S-adenosylmethionine (SAM) enzymes, into 5-deoxyribose and adenine. Thus, is required for in vivo function of the radical SAM enzymes biotin synthase and lipoic acid synthase, that are inhibited by 5'-deoxyadenosine accumulation. The chain is 5'-methylthioadenosine/S-adenosylhomocysteine nucleosidase from Salmonella enteritidis PT4 (strain P125109).